A 31-amino-acid polypeptide reads, in one-letter code: Cytochrome b6-f complex subunit 6 (31 aa).

The chain crosses the membrane as a helical span at residues Ile-3–Phe-23.

This sequence belongs to the PetL family. The 4 large subunits of the cytochrome b6-f complex are cytochrome b6, subunit IV (17 kDa polypeptide, PetD), cytochrome f and the Rieske protein, while the 4 small subunits are PetG, PetL, PetM and PetN. The complex functions as a dimer.

Its subcellular location is the plastid. The protein localises to the chloroplast thylakoid membrane. In terms of biological role, component of the cytochrome b6-f complex, which mediates electron transfer between photosystem II (PSII) and photosystem I (PSI), cyclic electron flow around PSI, and state transitions. PetL is important for photoautotrophic growth as well as for electron transfer efficiency and stability of the cytochrome b6-f complex. This chain is Cytochrome b6-f complex subunit 6, found in Rhodomonas salina (Cryptomonas salina).